The sequence spans 529 residues: Cytochrome P450 monooxygenase ausG (529 aa).

Residues 31–51 (FLVTCGLPWLLLLFSVTIILF) form a helical membrane-spanning segment. C470 contributes to the heme binding site.

The protein belongs to the cytochrome P450 family. It depends on heme as a cofactor.

Its subcellular location is the membrane. It participates in secondary metabolite biosynthesis; terpenoid biosynthesis. Its function is as follows. Cytochrome P450 monooxygenase; part of the gene cluster B that mediates the biosynthesis of austinol and dehydroaustinol, two fungal meroterpenoids. The first step of the pathway is the synthesis of 3,5-dimethylorsellinic acid by the polyketide synthase ausA. 3,5-dimethylorsellinic acid is then prenylated by the polyprenyl transferase ausN. Further epoxidation by the FAD-dependent monooxygenase ausM and cyclization by the probable terpene cyclase ausL lead to the formation of protoaustinoid A. Protoaustinoid A is then oxidized to spiro-lactone preaustinoid A3 by the combined action of the FAD-binding monooxygenases ausB and ausC, and the dioxygenase ausE. Acid-catalyzed keto-rearrangement and ring contraction of the tetraketide portion of preaustinoid A3 by ausJ lead to the formation of preaustinoid A4. The aldo-keto reductase ausK, with the help of ausH, is involved in the next step by transforming preaustinoid A4 into isoaustinone which is in turn hydroxylated by the P450 monooxygenase ausI to form austinolide. Finally, the cytochrome P450 monooxygenase ausG modifies austinolide to austinol. Austinol can be further modified to dehydroaustinol which forms a diffusible complex with diorcinol that initiates conidiation. Due to genetic rearrangements of the clusters and the subsequent loss of some enzymes, the end products of the Emericella nidulans austinoid biosynthesis clusters are austinol and dehydroaustinol, even if additional enzymes, such as the O-acetyltransferase ausQ and the cytochrome P450 monooxygenase ausR are still functional. The polypeptide is Cytochrome P450 monooxygenase ausG (Emericella nidulans (strain FGSC A4 / ATCC 38163 / CBS 112.46 / NRRL 194 / M139) (Aspergillus nidulans)).